The chain runs to 161 residues: Phosphopantetheine adenylyltransferase (161 aa).

Ser9 contributes to the substrate binding site. ATP contacts are provided by residues 9 to 10 and His17; that span reads SF. 3 residues coordinate substrate: Lys41, Val73, and Lys87. ATP is bound by residues 88 to 90, Glu98, and 122 to 128; these read GLR and YSFVSSS.

The protein belongs to the bacterial CoaD family. In terms of assembly, homohexamer. The cofactor is Mg(2+).

It is found in the cytoplasm. It catalyses the reaction (R)-4'-phosphopantetheine + ATP + H(+) = 3'-dephospho-CoA + diphosphate. It functions in the pathway cofactor biosynthesis; coenzyme A biosynthesis; CoA from (R)-pantothenate: step 4/5. Reversibly transfers an adenylyl group from ATP to 4'-phosphopantetheine, yielding dephospho-CoA (dPCoA) and pyrophosphate. The sequence is that of Phosphopantetheine adenylyltransferase from Mycobacterium bovis (strain ATCC BAA-935 / AF2122/97).